A 319-amino-acid polypeptide reads, in one-letter code: HPr kinase/phosphorylase (319 aa).

Residues H137 and K158 contribute to the active site. 152–159 (GDSGVGKS) is a binding site for ATP. S159 is a Mg(2+) binding site. Residue D176 is the Proton acceptor; for phosphorylation activity. Proton donor; for dephosphorylation activity of the active site. The segment at 201–210 (MEIRGLGIIN) is important for the catalytic mechanism of both phosphorylation and dephosphorylation. E202 lines the Mg(2+) pocket. Residue R243 is part of the active site. The tract at residues 264-269 (PVRPGR) is important for the catalytic mechanism of dephosphorylation.

This sequence belongs to the HPrK/P family. As to quaternary structure, homohexamer. Requires Mg(2+) as cofactor.

It carries out the reaction [HPr protein]-L-serine + ATP = [HPr protein]-O-phospho-L-serine + ADP + H(+). The enzyme catalyses [HPr protein]-O-phospho-L-serine + phosphate + H(+) = [HPr protein]-L-serine + diphosphate. Catalyzes the ATP- as well as the pyrophosphate-dependent phosphorylation of a specific serine residue in HPr, a phosphocarrier protein of the phosphoenolpyruvate-dependent sugar phosphotransferase system (PTS). HprK/P also catalyzes the pyrophosphate-producing, inorganic phosphate-dependent dephosphorylation (phosphorolysis) of seryl-phosphorylated HPr (P-Ser-HPr). The sequence is that of HPr kinase/phosphorylase from Treponema pallidum subsp. pallidum (strain SS14).